The primary structure comprises 76 residues: Defensin-like protein 71 (76 aa).

An N-terminal signal peptide occupies residues 1 to 22 (MAMTQVFVIFILLATSLCNSNA). 4 cysteine pairs are disulfide-bonded: cysteine 36–cysteine 74, cysteine 40–cysteine 63, cysteine 49–cysteine 72, and cysteine 53–cysteine 73.

This sequence belongs to the DEFL family.

The protein resides in the secreted. The protein is Defensin-like protein 71 (LCR84) of Arabidopsis thaliana (Mouse-ear cress).